Here is a 36-residue protein sequence, read N- to C-terminus: Pancreatic polypeptide (36 aa).

Tyr-36 bears the Tyrosine amide mark.

This sequence belongs to the NPY family.

The protein resides in the secreted. Functionally, hormone secreted by pancreatic cells that acts as a regulator of pancreatic and gastrointestinal functions probably by signaling through the G protein-coupled receptor NPY4R2. This chain is Pancreatic polypeptide (PPY), found in Oryctolagus cuniculus (Rabbit).